Reading from the N-terminus, the 426-residue chain is Histidine--tRNA ligase (426 aa).

The protein belongs to the class-II aminoacyl-tRNA synthetase family. As to quaternary structure, homodimer.

It is found in the cytoplasm. It carries out the reaction tRNA(His) + L-histidine + ATP = L-histidyl-tRNA(His) + AMP + diphosphate + H(+). This is Histidine--tRNA ligase from Chlorobium phaeovibrioides (strain DSM 265 / 1930) (Prosthecochloris vibrioformis (strain DSM 265)).